Here is a 249-residue protein sequence, read N- to C-terminus: Ribosomal RNA small subunit methyltransferase J (249 aa).

Residue Asp-169 coordinates S-adenosyl-L-methionine.

Belongs to the methyltransferase superfamily. RsmJ family.

Its subcellular location is the cytoplasm. It carries out the reaction guanosine(1516) in 16S rRNA + S-adenosyl-L-methionine = N(2)-methylguanosine(1516) in 16S rRNA + S-adenosyl-L-homocysteine + H(+). In terms of biological role, specifically methylates the guanosine in position 1516 of 16S rRNA. The chain is Ribosomal RNA small subunit methyltransferase J from Buchnera aphidicola subsp. Schizaphis graminum (strain Sg).